We begin with the raw amino-acid sequence, 434 residues long: ATP-sensitive inward rectifier potassium channel 14 (434 aa).

Topologically, residues 1-81 are cytoplasmic; it reads MGLARALRRL…LSDLFTTCVD (81 aa). Cys79 is subject to S-nitrosocysteine. The helical transmembrane segment at 82 to 108 threads the bilayer; that stretch reads VRWRWMCLLFSCSFLASWLLFGLTFWL. The Extracellular portion of the chain corresponds to 109-131; the sequence is IASLHGDLAAPPPPAPCFSQVAS. The segment at residues 132-148 is an intramembrane region (helical; Pore-forming); sequence FLAAFLFALETQTSIGY. A Selectivity filter motif is present at residues 145 to 150; sequence SIGYGV. The Extracellular portion of the chain corresponds to 149 to 157; the sequence is GVRSVTEEC. A helical transmembrane segment spans residues 158–185; it reads PAAVAAVVLQCIAGCVLDAFVVGAVMAK. Over 186-434 the chain is Cytoplasmic; the sequence is MAKPKKRNET…TPTLALTLPP (249 aa). Residues 398–434 form a disordered region; the sequence is QEEDEEEDTKEGTSAETPDRAASPQALTPTLALTLPP. Residues 407–416 show a composition bias toward basic and acidic residues; sequence KEGTSAETPD. Residues 418 to 434 show a composition bias toward low complexity; it reads AASPQALTPTLALTLPP.

Belongs to the inward rectifier-type potassium channel (TC 1.A.2.1) family. KCNJ14 subfamily. As to expression, expressed predominantly in motoneurons of cranial nerve motor nuclei within the general somatic and special visceral motor cell column.

It localises to the membrane. The enzyme catalyses K(+)(in) = K(+)(out). Channel activity is regulated by variations of cytosolic pH; channels are activated by alkaline and inhibited by acidic pH values. Inhibited by Ba(2+) and Cs(+) in a voltage-dependent manner; sensitivity to those inhibitors is lower than in other Kir channels. Its function is as follows. Inward rectifier potassium channels are characterized by a greater tendency to allow potassium to flow into the cell rather than out of it. Their voltage dependence is regulated by the concentration of extracellular potassium; as external potassium is raised, the voltage range of the channel opening shifts to more positive voltages. This is ATP-sensitive inward rectifier potassium channel 14 (Kcnj14) from Rattus norvegicus (Rat).